The sequence spans 548 residues: Formyltransferase/hydrolase complex Fhc subunit A (548 aa).

Zn(2+) is bound by residues His57, His59, and His227.

The protein belongs to the metallo-dependent hydrolases superfamily. FwdA/FmdA family. Octaheteromer. Part of the formyltransferase/hydrolase complex fhc; composed of FhcA, FhcB, FhcC and FhcD. Zn(2+) is required as a cofactor.

Its subcellular location is the cytoplasm. The enzyme catalyses N-formylmethanofuran + H2O = methanofuran + formate. Its pathway is one-carbon metabolism; formaldehyde degradation; formate from formaldehyde (H(4)MPT route): step 4/5. In terms of biological role, involved in the transformation of 5-formyl tetrahydromethanopterin (5-formyl-H(4)MPT) to methanofuran (MFR) and formate via the formylmethanofuran (formyl-MFR). May be catalyze the hydrolysis of formylmethanofuran (formyl-MFR) to yield formate and MFR. This Methylorubrum extorquens (strain ATCC 14718 / DSM 1338 / JCM 2805 / NCIMB 9133 / AM1) (Methylobacterium extorquens) protein is Formyltransferase/hydrolase complex Fhc subunit A (fhcA).